Consider the following 385-residue polypeptide: Transcription factor TGAL3 (385 aa).

Positions leucine 62–arginine 113 are disordered. The span at serine 87 to methionine 96 shows a compositional bias: basic and acidic residues. The bZIP domain occupies aspartate 93 to arginine 137. Residues lysine 95–lysine 115 form a basic motif region. The tract at residues leucine 121 to leucine 135 is leucine-zipper. Residues threonine 162–arginine 382 enclose the DOG1 domain.

Belongs to the bZIP family. As to quaternary structure, interacts with NPR1/NH1, NPR2/NH2 and NPR3/NH3.

It localises to the nucleus. Transcriptional regulator involved in defense response. The sequence is that of Transcription factor TGAL3 from Oryza sativa subsp. japonica (Rice).